Here is a 316-residue protein sequence, read N- to C-terminus: Ornithine carbamoyltransferase (316 aa).

Carbamoyl phosphate contacts are provided by residues 57–60 (STRT), Gln-84, Arg-108, and 135–138 (HPCQ). Residues Asn-166, Asp-230, and 234–235 (SM) each bind L-ornithine. Residues 269–270 (CL) and Arg-297 each bind carbamoyl phosphate.

Belongs to the aspartate/ornithine carbamoyltransferase superfamily. OTCase family.

It localises to the cytoplasm. The catalysed reaction is carbamoyl phosphate + L-ornithine = L-citrulline + phosphate + H(+). Its pathway is amino-acid degradation; L-arginine degradation via ADI pathway; carbamoyl phosphate from L-arginine: step 2/2. Reversibly catalyzes the transfer of the carbamoyl group from carbamoyl phosphate (CP) to the N(epsilon) atom of ornithine (ORN) to produce L-citrulline. The protein is Ornithine carbamoyltransferase of Bacillus cereus (strain 03BB102).